Here is a 171-residue protein sequence, read N- to C-terminus: Large ribosomal subunit protein bL9 (171 aa).

Belongs to the bacterial ribosomal protein bL9 family.

Functionally, binds to the 23S rRNA. The sequence is that of Large ribosomal subunit protein bL9 from Rickettsia felis (strain ATCC VR-1525 / URRWXCal2) (Rickettsia azadi).